Reading from the N-terminus, the 392-residue chain is Probable tRNA sulfurtransferase (392 aa).

The THUMP domain occupies 60–162; the sequence is QQVINDLQQV…HDCAIVYGHK (103 aa). Residues 180-181, 205-206, Arg264, Gly286, and Gln295 each bind ATP; these read LL and TF.

This sequence belongs to the ThiI family.

It localises to the cytoplasm. The enzyme catalyses [ThiI sulfur-carrier protein]-S-sulfanyl-L-cysteine + a uridine in tRNA + 2 reduced [2Fe-2S]-[ferredoxin] + ATP + H(+) = [ThiI sulfur-carrier protein]-L-cysteine + a 4-thiouridine in tRNA + 2 oxidized [2Fe-2S]-[ferredoxin] + AMP + diphosphate. It carries out the reaction [ThiS sulfur-carrier protein]-C-terminal Gly-Gly-AMP + S-sulfanyl-L-cysteinyl-[cysteine desulfurase] + AH2 = [ThiS sulfur-carrier protein]-C-terminal-Gly-aminoethanethioate + L-cysteinyl-[cysteine desulfurase] + A + AMP + 2 H(+). It participates in cofactor biosynthesis; thiamine diphosphate biosynthesis. Functionally, catalyzes the ATP-dependent transfer of a sulfur to tRNA to produce 4-thiouridine in position 8 of tRNAs, which functions as a near-UV photosensor. Also catalyzes the transfer of sulfur to the sulfur carrier protein ThiS, forming ThiS-thiocarboxylate. This is a step in the synthesis of thiazole, in the thiamine biosynthesis pathway. The sulfur is donated as persulfide by IscS. In Ureaplasma urealyticum serovar 10 (strain ATCC 33699 / Western), this protein is Probable tRNA sulfurtransferase.